The following is a 430-amino-acid chain: Elongation factor Tu (430 aa).

One can recognise a tr-type G domain in the interval 13–220 (RPHLNIGTIG…ACDKYIALPE (208 aa)). The G1 stretch occupies residues 22 to 29 (GHVDHGKT). Residue 22-29 (GHVDHGKT) coordinates GTP. Residue Thr-29 participates in Mg(2+) binding. A G2 region spans residues 66-70 (GITIS). The tract at residues 87-90 (DCPG) is G3. GTP is bound by residues 87–91 (DCPGH) and 142–145 (NKCD). A G4 region spans residues 142–145 (NKCD). The segment at 188-190 (SAL) is G5.

Belongs to the TRAFAC class translation factor GTPase superfamily. Classic translation factor GTPase family. EF-Tu/EF-1A subfamily. In terms of assembly, monomer.

It localises to the cytoplasm. It carries out the reaction GTP + H2O = GDP + phosphate + H(+). Its function is as follows. GTP hydrolase that promotes the GTP-dependent binding of aminoacyl-tRNA to the A-site of ribosomes during protein biosynthesis. The chain is Elongation factor Tu from Neorickettsia sennetsu (strain ATCC VR-367 / Miyayama) (Ehrlichia sennetsu).